The chain runs to 319 residues: Ankyrin repeat domain-containing protein 1 (319 aa).

A coiled-coil region spans residues 63–89 (EKQLEAELKKKKLEQRSKLENLEDLEI). 5 ANK repeats span residues 152–181 (YKRTALHRACLEGHLAIVEKLMEAGAQIEF), 185–214 (LESTAIHWACRGGNLEVLKLLLNKGAKISA), 218–247 (LLSTALHVAVRTGHYECAEHLIACEADLNA), 251–280 (EGDTPLHDAVRLNRYKMIRLLIMYGADLTI), and 284–315 (AGKTPMDLVLNWQNGTKAIFDSLKENSYKTSR).

Interacts with TTN/titin and YBX1.

Its subcellular location is the nucleus. May play an important role in endothelial cell activation. May act as a nuclear transcription factor that negatively regulates the expression of cardiac genes. The chain is Ankyrin repeat domain-containing protein 1 (ANKRD1) from Oryctolagus cuniculus (Rabbit).